The chain runs to 565 residues: Carboxylesterase 1D (565 aa).

An N-terminal signal peptide occupies residues 1 to 18 (MGLYPLIWLSLAACTAWG). A glycan (N-linked (GlcNAc...) asparagine) is linked at Asn-79. A disulfide bridge links Cys-87 with Cys-116. Ser-221 serves as the catalytic Acyl-ester intermediate. Cys-273 and Cys-284 are oxidised to a cystine. The active-site Charge relay system is Glu-353. An N6-succinyllysine modification is found at Lys-382. Catalysis depends on His-466, which acts as the Charge relay system. The N-linked (GlcNAc...) asparagine glycan is linked to Asn-489. The Prevents secretion from ER motif lies at 562-565 (HVEL).

This sequence belongs to the type-B carboxylesterase/lipase family. In terms of assembly, homotrimer. Highest expression occurs in liver with lower levels in adipose tissue, kidney, heart, intestine, lung, testis and thymus.

The protein localises to the endoplasmic reticulum lumen. It is found in the cytoplasm. The protein resides in the cytosol. Its subcellular location is the lipid droplet. It localises to the microsome. It carries out the reaction a carboxylic ester + H2O = an alcohol + a carboxylate + H(+). The catalysed reaction is a long-chain fatty acyl ethyl ester + H2O = a long-chain fatty acid + ethanol + H(+). It catalyses the reaction all-trans-retinyl hexadecanoate + H2O = all-trans-retinol + hexadecanoate + H(+). In terms of biological role, major lipase in white adipose tissue. Involved in the metabolism of xenobiotics and of natural substrates. Hydrolyzes triacylglycerols and monoacylglycerols, with a preference for monoacylglycerols. The susceptibility of the substrate increases with decreasing acyl chain length of the fatty acid moiety. Catalyzes the synthesis of fatty acid ethyl esters. Hydrolyzes retinyl esters. The polypeptide is Carboxylesterase 1D (Mus musculus (Mouse)).